The primary structure comprises 48 residues: ATP synthase protein 8 (48 aa).

Residues 13–32 (LTYGFLLMITLLILFSQFFL) traverse the membrane as a helical segment.

It belongs to the ATPase protein 8 family. In terms of assembly, F-type ATPases have 2 components, CF(1) - the catalytic core - and CF(0) - the membrane proton channel. In yeast, the dimeric form of ATP synthase consists of 17 polypeptides: alpha, beta, gamma, delta, epsilon, 4 (B), 5 (OSCP), 6 (A), 8, 9 (C), d, E (Tim11), f, g, h, i/j and k.

It is found in the mitochondrion membrane. Mitochondrial membrane ATP synthase (F(1)F(0) ATP synthase or Complex V) produces ATP from ADP in the presence of a proton gradient across the membrane which is generated by electron transport complexes of the respiratory chain. F-type ATPases consist of two structural domains, F(1) - containing the extramembraneous catalytic core and F(0) - containing the membrane proton channel, linked together by a central stalk and a peripheral stalk. During catalysis, ATP synthesis in the catalytic domain of F(1) is coupled via a rotary mechanism of the central stalk subunits to proton translocation. Part of the complex F(0) domain. Minor subunit located with subunit a in the membrane. The sequence is that of ATP synthase protein 8 (ATP8) from Saccharomyces cerevisiae (strain ATCC 204508 / S288c) (Baker's yeast).